A 178-amino-acid chain; its full sequence is Large ribosomal subunit protein uL5 (178 aa).

Alanine 2 is modified (N-acetylalanine). A Glycyl lysine isopeptide (Lys-Gly) (interchain with G-Cter in SUMO2) cross-link involves residue lysine 38. Phosphothreonine is present on residues threonine 44 and threonine 47. Lysine 52 bears the N6-acetyllysine; alternate mark. Lysine 52 is covalently cross-linked (Glycyl lysine isopeptide (Lys-Gly) (interchain with G-Cter in SUMO2); alternate). Lysine 85 carries the N6-acetyllysine modification. A Glycyl lysine isopeptide (Lys-Gly) (interchain with G-Cter in SUMO2) cross-link involves residue lysine 154.

The protein belongs to the universal ribosomal protein uL5 family. Component of the large ribosomal subunit (LSU). Part of the 5S RNP complex, which is a LSU subcomplex composed of the 5S RNA, RPL5 and RPL11. Component of a hexameric 5S RNP precursor complex, composed of 5S RNA, RRS1, RPF2/BXDC1, RPL5, RPL11 and HEATR3; this complex acts as a precursor for ribosome assembly. Interacts with PML. Interacts with MDM2 (via its RanBP2-type zinc finger domain); negatively regulates MDM2-mediated TP53 ubiquitination and degradation. Interacts with NOP53; retains RPL11 into the nucleolus.

Its subcellular location is the nucleus. The protein localises to the nucleolus. It localises to the cytoplasm. Its function is as follows. Component of the ribosome, a large ribonucleoprotein complex responsible for the synthesis of proteins in the cell. The small ribosomal subunit (SSU) binds messenger RNAs (mRNAs) and translates the encoded message by selecting cognate aminoacyl-transfer RNA (tRNA) molecules. The large subunit (LSU) contains the ribosomal catalytic site termed the peptidyl transferase center (PTC), which catalyzes the formation of peptide bonds, thereby polymerizing the amino acids delivered by tRNAs into a polypeptide chain. The nascent polypeptides leave the ribosome through a tunnel in the LSU and interact with protein factors that function in enzymatic processing, targeting, and the membrane insertion of nascent chains at the exit of the ribosomal tunnel. As part of the 5S RNP/5S ribonucleoprotein particle it is an essential component of the LSU, required for its formation and the maturation of rRNAs. It also couples ribosome biogenesis to p53/TP53 activation. As part of the 5S RNP it accumulates in the nucleoplasm and inhibits MDM2, when ribosome biogenesis is perturbed, mediating the stabilization and the activation of TP53. Promotes nucleolar location of PML. This is Large ribosomal subunit protein uL5 (RPL11) from Oryctolagus cuniculus (Rabbit).